We begin with the raw amino-acid sequence, 192 residues long: MTTIRKKLVIVGDGACGKTCLLIVFSKDQFPEVYVPTVFENYVADIEVDGKQVELALWDTAGQEDYDRLRPLSYPDTDVILMCFSVDSPDSLENIPEKWTPEVKHFCPNVPIILVGNKKDLRNDPNTIRDLAKMKQEPVKPQEGRAMAEKINAFAYLECSAKSKEGVRDVFETATRAALQVKKRKKTRCLLL.

12–19 contributes to the GTP binding site; sequence GDGACGKT. An Effector region motif is present at residues 34 to 42; that stretch reads YVPTVFENY. Residues 59–63 and 117–120 each bind GTP; these read DTAGQ and NKKD. The residue at position 189 (cysteine 189) is a Cysteine methyl ester. Cysteine 189 is lipidated: S-geranylgeranyl cysteine. Positions 190–192 are cleaved as a propeptide — removed in mature form; it reads LLL.

The protein belongs to the small GTPase superfamily. Rho family. As to quaternary structure, interacts with capu. Interacts (via REM repeats) with Pkn (via N-terminus). Interacts (via N-terminus) with wash (via N-terminus). May interact with dia/diaphanous (via CBD/FH3 domain). As to expression, expressed in hemocytes (at protein level).

The protein localises to the cell membrane. The protein resides in the cytoplasm. Its subcellular location is the cytoskeleton. It is found in the apical cell membrane. It localises to the lateral cell membrane. Has a role in regulating actin cytoskeletal organization: required during early development for proper execution of morphogenetic movements of individual cells and groups of cells important for the formation of the embryonic body plan. Plays a role in regulating dorsal closure during embryogenesis. During axis elongation, required for Rho-kinase Rok planar polarity and adherens junction localization as well as for generating a planar polarized distribution of the actin-binding protein Shrm. During embryogenesis, acts upstream of wash to regulate the developmental migration of tail hemocytes anteriorly along the ventral midline. May have a role in eye development. Involved in targeted recruitment of dia/diaphanous to apical membranes of polarized epithelial cells. The chain is Ras-like GTP-binding protein Rho1 from Drosophila melanogaster (Fruit fly).